The following is a 307-amino-acid chain: uncharacterized protein (307 aa).

The disordered stretch occupies residues 254–278 (HSRHHRRHHRRHHHHHHQNSSHSDE). Residues 255-272 (SRHHRRHHRRHHHHHHQN) are compositionally biased toward basic residues.

The protein to yeast YOR062c.

This is an uncharacterized protein from Saccharomyces cerevisiae (strain ATCC 204508 / S288c) (Baker's yeast).